The following is a 474-amino-acid chain: Bifunctional protein HldE (474 aa).

Residues 1–318 (MKLSMPRFDQ…RAIQREEGSE (318 aa)) are ribokinase. Residue 194–197 (NLSE) coordinates ATP. Residue aspartate 263 is part of the active site. The interval 343–474 (FTNGCFDILH…AIVEKIRKSE (132 aa)) is cytidylyltransferase.

It in the N-terminal section; belongs to the carbohydrate kinase PfkB family. The protein in the C-terminal section; belongs to the cytidylyltransferase family. Homodimer.

It catalyses the reaction D-glycero-beta-D-manno-heptose 7-phosphate + ATP = D-glycero-beta-D-manno-heptose 1,7-bisphosphate + ADP + H(+). The catalysed reaction is D-glycero-beta-D-manno-heptose 1-phosphate + ATP + H(+) = ADP-D-glycero-beta-D-manno-heptose + diphosphate. It functions in the pathway nucleotide-sugar biosynthesis; ADP-L-glycero-beta-D-manno-heptose biosynthesis; ADP-L-glycero-beta-D-manno-heptose from D-glycero-beta-D-manno-heptose 7-phosphate: step 1/4. The protein operates within nucleotide-sugar biosynthesis; ADP-L-glycero-beta-D-manno-heptose biosynthesis; ADP-L-glycero-beta-D-manno-heptose from D-glycero-beta-D-manno-heptose 7-phosphate: step 3/4. Catalyzes the phosphorylation of D-glycero-D-manno-heptose 7-phosphate at the C-1 position to selectively form D-glycero-beta-D-manno-heptose-1,7-bisphosphate. In terms of biological role, catalyzes the ADP transfer from ATP to D-glycero-beta-D-manno-heptose 1-phosphate, yielding ADP-D-glycero-beta-D-manno-heptose. This Pseudomonas fluorescens (strain Pf0-1) protein is Bifunctional protein HldE.